Consider the following 186-residue polypeptide: Potassium-transporting ATPase KdpC subunit 1 (186 aa).

Residues 10-30 (LTIITMVLCGFLFPLAITLIG) traverse the membrane as a helical segment.

It belongs to the KdpC family. As to quaternary structure, the system is composed of three essential subunits: KdpA, KdpB and KdpC.

The protein localises to the cell membrane. Part of the high-affinity ATP-driven potassium transport (or Kdp) system, which catalyzes the hydrolysis of ATP coupled with the electrogenic transport of potassium into the cytoplasm. This subunit acts as a catalytic chaperone that increases the ATP-binding affinity of the ATP-hydrolyzing subunit KdpB by the formation of a transient KdpB/KdpC/ATP ternary complex. This chain is Potassium-transporting ATPase KdpC subunit 1, found in Staphylococcus aureus (strain Mu50 / ATCC 700699).